The following is a 218-amino-acid chain: 23 kDa integral membrane protein (218 aa).

The Cytoplasmic segment spans residues 1-12 (MATLGTGMRCLK). Residues 13–36 (SCVFVLNIICLLCSLVLIGAGAYV) traverse the membrane as a helical segment. The Extracellular portion of the chain corresponds to 37–55 (EVKFSQYGDNLHKVWQAAP). Residues 56 to 71 (IAIIVVGVIILIVSFL) traverse the membrane as a helical segment. At 72 to 82 (GCCGAIKENVC) the chain is on the cytoplasmic side. A helical membrane pass occupies residues 83–108 (MLYMYAFFLVVLLIAELAAAIVAVVY). The Extracellular portion of the chain corresponds to 109-183 (KDRIDSEIDA…SVFGAFLKRN (75 aa)). Asparagine 165 is a glycosylation site (N-linked (GlcNAc...) asparagine). The chain crosses the membrane as a helical span at residues 184-205 (LVIVACVAFGVCFFQLLSIVIA). Residues 206–218 (CCLGRQIKEYENV) lie on the Cytoplasmic side of the membrane.

It belongs to the tetraspanin (TM4SF) family.

The protein localises to the membrane. In Schistosoma mansoni (Blood fluke), this protein is 23 kDa integral membrane protein.